Here is a 375-residue protein sequence, read N- to C-terminus: Succinyl-diaminopimelate desuccinylase (375 aa).

Residue histidine 66 participates in Zn(2+) binding. Aspartate 68 is an active-site residue. Aspartate 99 serves as a coordination point for Zn(2+). The Proton acceptor role is filled by glutamate 133. Residues glutamate 134, glutamate 162, and histidine 348 each coordinate Zn(2+).

Belongs to the peptidase M20A family. DapE subfamily. As to quaternary structure, homodimer. Zn(2+) serves as cofactor. Co(2+) is required as a cofactor.

It carries out the reaction N-succinyl-(2S,6S)-2,6-diaminopimelate + H2O = (2S,6S)-2,6-diaminopimelate + succinate. Its pathway is amino-acid biosynthesis; L-lysine biosynthesis via DAP pathway; LL-2,6-diaminopimelate from (S)-tetrahydrodipicolinate (succinylase route): step 3/3. Catalyzes the hydrolysis of N-succinyl-L,L-diaminopimelic acid (SDAP), forming succinate and LL-2,6-diaminopimelate (DAP), an intermediate involved in the bacterial biosynthesis of lysine and meso-diaminopimelic acid, an essential component of bacterial cell walls. The polypeptide is Succinyl-diaminopimelate desuccinylase (Stenotrophomonas maltophilia (strain K279a)).